Here is a 527-residue protein sequence, read N- to C-terminus: Serine/threonine-protein kinase NLK (527 aa).

Sufficient for interaction with DAPK3 regions lie at residues 1–125 (MSLC…KAHH) and 124–416 (HHHQ…SKRI). 2 required for interaction with TAB2 regions span residues 1–304 (MSLC…VVTQ) and 434–527 (YHTC…LVWE). 2 disordered regions span residues 22–72 (AAAA…SSAA) and 90–139 (QQPY…LDIE). Over residues 26–54 (GHHHHHHHHLPHLPPPHLHHHHHPQHHLH) the composition is skewed to basic residues. Residues 103 to 119 (PGPAAAAPAQVQAAAAA) show a composition bias toward low complexity. Residues 122 to 131 (KAHHHQHSHH) are compositionally biased toward basic residues. The region spanning 138–427 (IEPDRPIGYG…AKDALAHPYL (290 aa)) is the Protein kinase domain. ATP contacts are provided by residues 144 to 152 (IGYGAFGVV) and Lys167. Catalysis depends on Asp264, which acts as the Proton acceptor. At Thr298 the chain carries Phosphothreonine; by autocatalysis. The TQE signature appears at 298–300 (TQE). The tract at residues 428–527 (DEGRLRYHTC…EMPPSPLVWE (100 aa)) is required for homodimerization and kinase activation and localization to the nucleus. Ser522 is modified (phosphoserine).

This sequence belongs to the protein kinase superfamily. CMGC Ser/Thr protein kinase family. MAP kinase subfamily. In terms of assembly, homodimer. Homodimerization is required for intermolecular autophosphorylation, kinase activation and nuclear localization. Interacts with RNF138/NARF. Interacts with FOXO1 and FOXO3. Interacts with the upstream activating kinases HIPK2 and MAP3K7/TAK1. Interaction with MAP3K7/TAK1 seems to be indirect, and may be mediated by other proteins such as STAT3, TAB1 and TAB2. Interacts with and phosphorylates a number of transcription factors including FOXO4, LEF1, MYB, MYBL1, MYBL2, NOTCH1 and TCF7L2/TCF4. May interact with components of cullin-RING-based SCF (SKP1-CUL1-F-box protein) E3 ubiquitin-protein ligase complexes. Interacts with MEF2A. Interacts with ATF5; the interaction stabilizes ATF5 at the protein level in a kinase-independent manner. Requires Mg(2+) as cofactor. In terms of processing, phosphorylated on Thr-298. Intermolecular autophosphorylation on Thr-298 activates the enzyme. Expressed at high levels in the brain, and at lower levels in heart, kidney, lung and liver.

The protein resides in the nucleus. It is found in the cytoplasm. It carries out the reaction L-seryl-[protein] + ATP = O-phospho-L-seryl-[protein] + ADP + H(+). The catalysed reaction is L-threonyl-[protein] + ATP = O-phospho-L-threonyl-[protein] + ADP + H(+). With respect to regulation, activated by the non-canonical Wnt signaling pathway, in which WNT5A leads to activation of MAP3K7/TAK1 and HIPK2, which subsequently phosphorylates and activates this protein. Activated by dimerization and subsequent intermolecular autophosphorylation on Thr-298. Other cytokines such as IL6 may also activate this regulatory circuit. Its function is as follows. Serine/threonine-protein kinase that regulates a number of transcription factors with key roles in cell fate determination. Positive effector of the non-canonical Wnt signaling pathway, acting downstream of WNT5A, MAP3K7/TAK1 and HIPK2. Negative regulator of the canonical Wnt/beta-catenin signaling pathway. Binds to and phosphorylates TCF7L2/TCF4 and LEF1, promoting the dissociation of the TCF7L2/LEF1/beta-catenin complex from DNA, as well as the ubiquitination and subsequent proteolysis of LEF1. Together these effects inhibit the transcriptional activation of canonical Wnt/beta-catenin target genes. Negative regulator of the Notch signaling pathway. Binds to and phosphorylates NOTCH1, thereby preventing the formation of a transcriptionally active ternary complex of NOTCH1, RBPJ/RBPSUH and MAML1. Negative regulator of the MYB family of transcription factors. Phosphorylation of MYB leads to its subsequent proteolysis while phosphorylation of MYBL1 and MYBL2 inhibits their interaction with the coactivator CREBBP. Other transcription factors may also be inhibited by direct phosphorylation of CREBBP itself. Acts downstream of IL6 and MAP3K7/TAK1 to phosphorylate STAT3, which is in turn required for activation of NLK by MAP3K7/TAK1. Upon IL1B stimulus, cooperates with ATF5 to activate the transactivation activity of C/EBP subfamily members. Phosphorylates ATF5 but also stabilizes ATF5 protein levels in a kinase-independent manner. Acts as an inhibitor of the mTORC1 complex in response to osmotic stress by mediating phosphorylation of RPTOR, thereby preventing recruitment of the mTORC1 complex to lysosomes. This is Serine/threonine-protein kinase NLK from Mus musculus (Mouse).